We begin with the raw amino-acid sequence, 100 residues long: Urease subunit gamma (100 aa).

The protein belongs to the urease gamma subunit family. As to quaternary structure, heterotrimer of UreA (gamma), UreB (beta) and UreC (alpha) subunits. Three heterotrimers associate to form the active enzyme.

The protein resides in the cytoplasm. The enzyme catalyses urea + 2 H2O + H(+) = hydrogencarbonate + 2 NH4(+). Its pathway is nitrogen metabolism; urea degradation; CO(2) and NH(3) from urea (urease route): step 1/1. The chain is Urease subunit gamma from Mesorhizobium japonicum (strain LMG 29417 / CECT 9101 / MAFF 303099) (Mesorhizobium loti (strain MAFF 303099)).